The following is a 65-amino-acid chain: Large ribosomal subunit protein uL29 (65 aa).

Belongs to the universal ribosomal protein uL29 family.

This is Large ribosomal subunit protein uL29 from Brevibacillus brevis (strain 47 / JCM 6285 / NBRC 100599).